The chain runs to 347 residues: MSNGSHSSVQLKSSTYLSKPTFHFAAGLLSGLTSSILLQPADLLKTRVQQSRETAALLPTIRSILASPHPIQGLWRGTLPSALRTGFGSALYFTSLNTLRTAVAADDPGYLFRGGHGSKPQNGNSPSGVSASSALPKLSHTANLITGAVARVAAGFVMMPVTVLKVRYESDYYAYRSLWGAAKDIVRHEGVRGLFAGFGATAIRDAPYAGLYVVFYEQSKRSLASLLGASSPSARSTPTEQQKSPPSTASINFISGALAAGLATTITNPFDVVKTRVQLMPSKYKNMMRATALMLREDGMRSLFGGLGLRMGRKALSSALAWTVYEELIMWAEKRWAEEQRDVKGVL.

3 Solcar repeats span residues 18–102 (SKPT…LRTA), 138–222 (LSHT…SKRS), and 247–331 (STAS…LIMW). 6 consecutive transmembrane segments (helical) span residues 24 to 49 (FAAGLLSGLTSSILLQPADLLKTRVQ), 77 to 103 (GTLPSALRTGFGSALYFTSLNTLRTAV), 144 to 169 (LITGAVARVAAGFVMMPVTVLKVRYE), 197 to 220 (GFGATAIRDAPYAGLYVVFYEQSK), 251 to 277 (INFISGALAAGLATTITNPFDVVKTRV), and 306 to 324 (GLGLRMGRKALSSALAWTV).

This sequence belongs to the mitochondrial carrier (TC 2.A.29) family. SLC25A38 subfamily.

Its subcellular location is the mitochondrion inner membrane. It carries out the reaction glycine(in) = glycine(out). In terms of biological role, mitochondrial glycine transporter that imports glycine into the mitochondrial matrix. Plays an important role in providing glycine for the first enzymatic step in heme biosynthesis, the condensation of glycine with succinyl-CoA to produce 5-aminolevulinate (ALA) in the mitochondrial matrix. The protein is Mitochondrial glycine transporter of Coccidioides immitis (strain RS) (Valley fever fungus).